Reading from the N-terminus, the 45-residue chain is Phospholipase A2 3 (45 aa).

3 residues coordinate Ca(2+): Tyr20, Gly24, and Gly25. Residues Cys21 and Cys36 are joined by a disulfide bond. His39 is a catalytic residue. Asp40 lines the Ca(2+) pocket.

It depends on Ca(2+) as a cofactor. As to expression, expressed by the venom gland.

It localises to the secreted. The enzyme catalyses a 1,2-diacyl-sn-glycero-3-phosphocholine + H2O = a 1-acyl-sn-glycero-3-phosphocholine + a fatty acid + H(+). PLA2 catalyzes the calcium-dependent hydrolysis of the 2-acyl groups in 3-sn-phosphoglycerides. In Bothrops diporus (Chaco lancehead), this protein is Phospholipase A2 3.